Reading from the N-terminus, the 782-residue chain is Phosphoribosylformylglycinamidine synthase subunit PurL (782 aa).

The active site involves H48. ATP contacts are provided by Y51 and K90. E92 is a binding site for Mg(2+). Substrate-binding positions include 93–96 (SHNH) and R115. Residue H94 is the Proton acceptor of the active site. D116 serves as a coordination point for Mg(2+). Q239 is a substrate binding site. D267 provides a ligand contact to Mg(2+). A substrate-binding site is contributed by 311 to 313 (ESQ). 2 residues coordinate ATP: D525 and G562. Mg(2+) is bound at residue N563. A substrate-binding site is contributed by S565.

Belongs to the FGAMS family. In terms of assembly, monomer. Part of the FGAM synthase complex composed of 1 PurL, 1 PurQ and 2 PurS subunits.

Its subcellular location is the cytoplasm. It catalyses the reaction N(2)-formyl-N(1)-(5-phospho-beta-D-ribosyl)glycinamide + L-glutamine + ATP + H2O = 2-formamido-N(1)-(5-O-phospho-beta-D-ribosyl)acetamidine + L-glutamate + ADP + phosphate + H(+). Its pathway is purine metabolism; IMP biosynthesis via de novo pathway; 5-amino-1-(5-phospho-D-ribosyl)imidazole from N(2)-formyl-N(1)-(5-phospho-D-ribosyl)glycinamide: step 1/2. Its function is as follows. Part of the phosphoribosylformylglycinamidine synthase complex involved in the purines biosynthetic pathway. Catalyzes the ATP-dependent conversion of formylglycinamide ribonucleotide (FGAR) and glutamine to yield formylglycinamidine ribonucleotide (FGAM) and glutamate. The FGAM synthase complex is composed of three subunits. PurQ produces an ammonia molecule by converting glutamine to glutamate. PurL transfers the ammonia molecule to FGAR to form FGAM in an ATP-dependent manner. PurS interacts with PurQ and PurL and is thought to assist in the transfer of the ammonia molecule from PurQ to PurL. This is Phosphoribosylformylglycinamidine synthase subunit PurL from Nostoc sp. (strain PCC 7120 / SAG 25.82 / UTEX 2576).